A 417-amino-acid polypeptide reads, in one-letter code: Phosphoglycerate kinase (417 aa).

(2R)-3-phosphoglycerate contacts are provided by Val-23, Asp-24, Phe-25, Asn-26, Gln-38, Arg-39, Ser-62, His-63, Gly-65, Arg-66, Leu-121, Arg-122, His-169, and Arg-170. Residue Gly-213 participates in ADP binding. Gly-213 serves as a coordination point for CDP. Positions 214 and 215 each coordinate AMP. Ala-214 is a binding site for ATP. Position 214 (Ala-214) interacts with Mg(2+). CDP is bound at residue Asp-218. Mg(2+) is bound at residue Asp-218. Lys-219 contacts AMP. An ATP-binding site is contributed by Lys-219. Gly-237 provides a ligand contact to ADP. Residue Gly-237 coordinates CDP. Residues Gly-238 and Gly-312 each coordinate AMP. The ATP site is built by Gly-238 and Gly-312. Residues Gly-337 and Phe-342 each coordinate CDP. Phe-342 is an ADP binding site. Glu-343 serves as a coordination point for AMP. The ATP site is built by Glu-343, Asp-374, and Thr-375. Residue Asp-374 participates in Mg(2+) binding.

It belongs to the phosphoglycerate kinase family. As to quaternary structure, monomer. The cofactor is Mg(2+).

It localises to the cytoplasm. The protein localises to the secreted. The protein resides in the cell wall. It is found in the mitochondrion. The enzyme catalyses (2R)-3-phosphoglycerate + ATP = (2R)-3-phospho-glyceroyl phosphate + ADP. The protein operates within carbohydrate degradation; glycolysis; pyruvate from D-glyceraldehyde 3-phosphate: step 2/5. Its function is as follows. Catalyzes one of the two ATP producing reactions in the glycolytic pathway via the reversible conversion of 1,3-diphosphoglycerate to 3-phosphoglycerate. Both L- and D- forms of purine and pyrimidine nucleotides can be used as substrates, but the activity is much lower on pyrimidines. Negatively regulates the biosynthesis of acetyl-CoA from pyruvate in the mitochondrion. The polypeptide is Phosphoglycerate kinase (PGK1) (Candida albicans (strain SC5314 / ATCC MYA-2876) (Yeast)).